The primary structure comprises 416 residues: Serine hydroxymethyltransferase (416 aa).

(6S)-5,6,7,8-tetrahydrofolate contacts are provided by residues L118 and 122–124 (GHL). N6-(pyridoxal phosphate)lysine is present on K226. E242 contacts (6S)-5,6,7,8-tetrahydrofolate.

This sequence belongs to the SHMT family. As to quaternary structure, homodimer. Requires pyridoxal 5'-phosphate as cofactor.

The protein resides in the cytoplasm. The enzyme catalyses (6R)-5,10-methylene-5,6,7,8-tetrahydrofolate + glycine + H2O = (6S)-5,6,7,8-tetrahydrofolate + L-serine. It functions in the pathway one-carbon metabolism; tetrahydrofolate interconversion. The protein operates within amino-acid biosynthesis; glycine biosynthesis; glycine from L-serine: step 1/1. Catalyzes the reversible interconversion of serine and glycine with tetrahydrofolate (THF) serving as the one-carbon carrier. This reaction serves as the major source of one-carbon groups required for the biosynthesis of purines, thymidylate, methionine, and other important biomolecules. Also exhibits THF-independent aldolase activity toward beta-hydroxyamino acids, producing glycine and aldehydes, via a retro-aldol mechanism. This chain is Serine hydroxymethyltransferase, found in Helicobacter pylori (strain HPAG1).